A 268-amino-acid chain; its full sequence is Tryptophan synthase alpha chain (268 aa).

Active-site proton acceptor residues include Glu-49 and Asp-60.

This sequence belongs to the TrpA family. In terms of assembly, tetramer of two alpha and two beta chains.

The catalysed reaction is (1S,2R)-1-C-(indol-3-yl)glycerol 3-phosphate + L-serine = D-glyceraldehyde 3-phosphate + L-tryptophan + H2O. Its pathway is amino-acid biosynthesis; L-tryptophan biosynthesis; L-tryptophan from chorismate: step 5/5. Its function is as follows. The alpha subunit is responsible for the aldol cleavage of indoleglycerol phosphate to indole and glyceraldehyde 3-phosphate. This is Tryptophan synthase alpha chain from Escherichia coli O7:K1 (strain IAI39 / ExPEC).